The primary structure comprises 429 residues: Serine--tRNA ligase (429 aa).

235–237 (TAE) lines the L-serine pocket. 266–268 (RSE) is an ATP binding site. E289 contacts L-serine. An ATP-binding site is contributed by 353–356 (EISS). S389 provides a ligand contact to L-serine.

The protein belongs to the class-II aminoacyl-tRNA synthetase family. Type-1 seryl-tRNA synthetase subfamily. Homodimer. The tRNA molecule binds across the dimer.

It localises to the cytoplasm. It catalyses the reaction tRNA(Ser) + L-serine + ATP = L-seryl-tRNA(Ser) + AMP + diphosphate + H(+). The catalysed reaction is tRNA(Sec) + L-serine + ATP = L-seryl-tRNA(Sec) + AMP + diphosphate + H(+). The protein operates within aminoacyl-tRNA biosynthesis; selenocysteinyl-tRNA(Sec) biosynthesis; L-seryl-tRNA(Sec) from L-serine and tRNA(Sec): step 1/1. Functionally, catalyzes the attachment of serine to tRNA(Ser). Is also able to aminoacylate tRNA(Sec) with serine, to form the misacylated tRNA L-seryl-tRNA(Sec), which will be further converted into selenocysteinyl-tRNA(Sec). The chain is Serine--tRNA ligase from Histophilus somni (strain 2336) (Haemophilus somnus).